A 276-amino-acid chain; its full sequence is ATP synthase subunit a (276 aa).

6 consecutive transmembrane segments (helical) span residues 47–67 (WHID…WLFY), 107–127 (IAPL…MDLI), 152–172 (DLNV…FYSI), 188–208 (PFNH…TLVA), 226–246 (LIFI…SVPW), and 247–267 (AIFH…LTIV).

This sequence belongs to the ATPase A chain family. F-type ATPases have 2 components, CF(1) - the catalytic core - and CF(0) - the membrane proton channel. CF(1) has five subunits: alpha(3), beta(3), gamma(1), delta(1), epsilon(1). CF(0) has three main subunits: a(1), b(2) and c(9-12). The alpha and beta chains form an alternating ring which encloses part of the gamma chain. CF(1) is attached to CF(0) by a central stalk formed by the gamma and epsilon chains, while a peripheral stalk is formed by the delta and b chains.

The protein resides in the cell inner membrane. Its function is as follows. Key component of the proton channel; it plays a direct role in the translocation of protons across the membrane. This chain is ATP synthase subunit a, found in Shewanella pealeana (strain ATCC 700345 / ANG-SQ1).